A 244-amino-acid chain; its full sequence is Salivary gland SP38-40.A protein (244 aa).

The first 21 residues, 1–21 (MRIKFLVVLAVICLFAHYASA), serve as a signal peptide directing secretion. Disordered stretches follow at residues 23–91 (GMGG…EKKQ), 137–169 (PPPGAKKDDKKEKKTVKVVKPPKEKPPKKLRKE), and 206–244 (VQGKQKKGAKKAKGGKKAAPKPGPKPGPKQADKPKDAKK). Basic and acidic residues-rich tracts occupy residues 26–86 (GDKK…EVKK) and 157–169 (PPKEKPPKKLRKE). 2 repeat units span residues 29–34 (KPKDAP) and 35–40 (KPKDAP). The segment at 29-47 (KPKDAPKPKDAPKPKEVKP) is 3 X 6 AA approximate tandem repeats of K-P-K-D-A-P. The stretch at 41–47 (KPKEVKP) is one 1-3; approximate repeat. 2 repeat units span residues 156 to 159 (KPPK) and 161 to 164 (KPPK). The segment at 156–168 (KPPKEKPPKKLRK) is 3 X 4 AA approximate tandem repeats of K-P-P-K. A 2-3; approximate repeat occupies 165-168 (KLRK). Positions 209–224 (KQKKGAKKAKGGKKAA) are enriched in basic residues. 3 repeat units span residues 225–228 (PKPG), 229–232 (PKPG), and 233–236 (PKQA). Residues 225-240 (PKPGPKPGPKQADKPK) form a 4 X 4 AA approximate tandem repeats of P-K-[PQ]-[GA] region. Residues 235-244 (QADKPKDAKK) show a composition bias toward basic and acidic residues. One copy of the 3-4; approximate repeat lies at 237-240 (DKPK).

Salivary gland.

It localises to the secreted. Its function is as follows. Used by the larvae to construct a supramolecular structure, the larval tube. The chain is Salivary gland SP38-40.A protein (SP38-40.A) from Chironomus tentans (Midge).